A 47-amino-acid chain; its full sequence is Short transmembrane mitochondrial protein 1 (47 aa).

The helical transmembrane segment at 7 to 23 (GFTLGNVVGMYLAQNYD) threads the bilayer.

It belongs to the STMP1 family. As to quaternary structure, interacts with components of the ubiquinol-cytochrome c oxidoreductase (cytochrome b-c1 complex, complex III, CIII), such as UQCRC1/QCR1, UQCRC2/QCR2 and UQCR10/QCR9. Interacts with components of the cytochrome c oxidase (mitochondrial respiratory chain complex IV) complex, such as MT-CO2. As to expression, expressed in monocytes and dendritic cells.

It is found in the mitochondrion inner membrane. The protein resides in the mitochondrion outer membrane. The protein localises to the mitochondrion intermembrane space. In terms of biological role, microprotein involved in mitochondrial respiratory chain complex III (ubiquinol-cytochrome c oxidoreductase) and complex IV (mitochondrial cytochrome c oxidase complex) assembly. Required for the formation of mitochondrial supercomplexes (SCs). Also required for the activation of the NLRP3 inflammasome. The protein is Short transmembrane mitochondrial protein 1 of Homo sapiens (Human).